The following is a 445-amino-acid chain: Chromosomal replication initiator protein DnaA (445 aa).

Positions 1 to 72 are domain I, interacts with DnaA modulators; the sequence is MSGIDTIWEK…QEAFIEEIGE (72 aa). Residues 72–107 are domain II; that stretch reads EKLNIKVISSEDELMNNEKEAPVRKTQQTSQELLPN. The interval 108–324 is domain III, AAA+ region; it reads QLNTDNTFDT…GALTRVSAYS (217 aa). Residues Gly-152, Gly-154, Lys-155, and Thr-156 each contribute to the ATP site. Residues 325–445 form a domain IV, binds dsDNA region; it reads KLVNRELNSD…LKNIEKDITS (121 aa).

Belongs to the DnaA family. In terms of assembly, oligomerizes as a right-handed, spiral filament on DNA at oriC.

It localises to the cytoplasm. In terms of biological role, plays an essential role in the initiation and regulation of chromosomal replication. ATP-DnaA binds to the origin of replication (oriC) to initiate formation of the DNA replication initiation complex once per cell cycle. Binds the DnaA box (a 9 base pair repeat at the origin) and separates the double-stranded (ds)DNA. Forms a right-handed helical filament on oriC DNA; dsDNA binds to the exterior of the filament while single-stranded (ss)DNA is stabiized in the filament's interior. The ATP-DnaA-oriC complex binds and stabilizes one strand of the AT-rich DNA unwinding element (DUE), permitting loading of DNA polymerase. After initiation quickly degrades to an ADP-DnaA complex that is not apt for DNA replication. Binds acidic phospholipids. The polypeptide is Chromosomal replication initiator protein DnaA (Macrococcus caseolyticus (strain JCSC5402) (Macrococcoides caseolyticum)).